A 334-amino-acid polypeptide reads, in one-letter code: N-acetyl-gamma-glutamyl-phosphate reductase (334 aa).

Cys154 is a catalytic residue.

Belongs to the NAGSA dehydrogenase family. Type 1 subfamily.

It localises to the cytoplasm. It carries out the reaction N-acetyl-L-glutamate 5-semialdehyde + phosphate + NADP(+) = N-acetyl-L-glutamyl 5-phosphate + NADPH + H(+). The protein operates within amino-acid biosynthesis; L-arginine biosynthesis; N(2)-acetyl-L-ornithine from L-glutamate: step 3/4. In terms of biological role, catalyzes the NADPH-dependent reduction of N-acetyl-5-glutamyl phosphate to yield N-acetyl-L-glutamate 5-semialdehyde. The chain is N-acetyl-gamma-glutamyl-phosphate reductase from Aliivibrio fischeri (strain ATCC 700601 / ES114) (Vibrio fischeri).